Here is a 264-residue protein sequence, read N- to C-terminus: Thiamine pyrophosphokinase 1 (264 aa).

Over residues 1–12 (MPLPTMTHSSSF) the composition is skewed to polar residues. Positions 1 to 27 (MPLPTMTHSSSFLRLPATSSPHPPPAD) are disordered.

Belongs to the thiamine pyrophosphokinase family.

Its subcellular location is the cytoplasm. The protein resides in the cytosol. The catalysed reaction is thiamine + ATP = thiamine diphosphate + AMP + H(+). It participates in cofactor biosynthesis; thiamine diphosphate biosynthesis; thiamine diphosphate from thiamine: step 1/1. Its function is as follows. Catalyzes the phosphorylation of thiamine to thiamine pyrophosphate (TPP). TPP is an active cofactor for enzymes involved in glycolysis and energy production. Plant leaves require high levels of TPP for photosynthesis and carbohydrate metabolism. This Oryza sativa subsp. japonica (Rice) protein is Thiamine pyrophosphokinase 1 (TPK1).